We begin with the raw amino-acid sequence, 381 residues long: Creatine kinase M-type (381 aa).

Residues 11-98 (KLNYKPEEEY…FDPIIQDRHG (88 aa)) enclose the Phosphagen kinase N-terminal domain. The region spanning 125–367 (YVLSSRVRTG…KLMVEMEKKL (243 aa)) is the Phosphagen kinase C-terminal domain. 128-132 (SSRVR) provides a ligand contact to ATP. Residue serine 164 is modified to Phosphoserine. Position 166 is a phosphothreonine (threonine 166). Position 178 is a phosphoserine (serine 178). Position 180 is a phosphothreonine (threonine 180). Histidine 191 provides a ligand contact to ATP. The residue at position 199 (serine 199) is a Phosphoserine. ATP is bound by residues arginine 236 and arginine 292. Residues threonine 313 and threonine 322 each carry the phosphothreonine modification. ATP is bound by residues 320 to 325 (RGTGGV) and aspartate 335. At serine 372 the chain carries Phosphoserine.

It belongs to the ATP:guanido phosphotransferase family. In terms of assembly, dimer of identical or non-identical chains, which can be either B (brain type) or M (muscle type). With MM being the major form in skeletal muscle and myocardium, MB existing in myocardium, and BB existing in many tissues, especially brain.

Its subcellular location is the cytoplasm. It carries out the reaction creatine + ATP = N-phosphocreatine + ADP + H(+). Functionally, reversibly catalyzes the transfer of phosphate between ATP and various phosphogens (e.g. creatine phosphate). Creatine kinase isoenzymes play a central role in energy transduction in tissues with large, fluctuating energy demands, such as skeletal muscle, heart, brain and spermatozoa. In Canis lupus familiaris (Dog), this protein is Creatine kinase M-type (CKM).